Here is a 543-residue protein sequence, read N- to C-terminus: MEKKRTEQRNGVEKKIWEIADKLRGTIDGWDFKSYVLIGLFYRFLSENLCKYFNDSERRNNPDFSYENLTDDYEAIDALKDAAIASKGFFIKPSQLFQNVVKSIRENKNNEDLNTTLRDIFDDIEKSTELGDGRSKESFKGLFKDFNVSEVKLGSTLTIRTEKLKELLTSIDTMELDEFEKNSIDAFGDAYEFLISMYAQNAGKSGGEFFTPQDISELLARIAIGKKDTVDDVYDMACGSGSLLLQVIKVLGKEKTSLVSYYGQEINHTTYNLCRMNMILHNIDYANFNIINADTLTTKEWEKHYVNCSNENGFEVVVSNPPYSISWAGDKKSNLVSDVRFKDAGTLAPNSKADLAFVLHALYVLGQEGTAAIVCFPGILYREGKEQTIRKYLVDQNFVDAVIQLPSNLFSTTSIATSILVLKKNRDKKDPIFFIDGSNEFVREKKNNRLSPKNIEKIVDCFNSKKEEANFAKSVERDKIRESNYDLTVGKYVNSEAEKEELDIKVLNHSIDEIVDKQKDLRTKIKDIIQDIKVDFDNIDINN.

Residues Glu-208–Gln-213, Ser-240–Ser-242, and Glu-265 each bind S-adenosyl-L-methionine.

The protein belongs to the N(4)/N(6)-methyltransferase family. The methyltransferase is composed of M and S polypeptides.

The catalysed reaction is a 2'-deoxyadenosine in DNA + S-adenosyl-L-methionine = an N(6)-methyl-2'-deoxyadenosine in DNA + S-adenosyl-L-homocysteine + H(+). Its function is as follows. The subtype gamma methyltransferase (M) subunit of a type I restriction enzyme. The M and S subunits together form a methyltransferase (MTase) that probably methylates A-2 on the top strand and A-3 on the bottom strand of the sequence 5'-GAN(7)TAY-3'. As the bacterial DNA is methylated on this sequence and this is the only type I methylase in the genome, it is probably responsible for all of the methylation on this site in the genome. The R subunit has multiple frameshifts and is probably not expressed in this bacteria. The protein is Type I restriction enzyme MpnII methylase subunit of Mycoplasma pneumoniae (strain ATCC 29342 / M129 / Subtype 1) (Mycoplasmoides pneumoniae).